Consider the following 290-residue polypeptide: Ribonuclease HIII (290 aa).

Residues 78 to 290 (LPLIGTDEVG…FKNTEKAKNA (213 aa)) form the RNase H type-2 domain. The a divalent metal cation site is built by aspartate 84, glutamate 85, and aspartate 187.

Belongs to the RNase HII family. RnhC subfamily. It depends on Mn(2+) as a cofactor. The cofactor is Mg(2+).

The protein localises to the cytoplasm. The enzyme catalyses Endonucleolytic cleavage to 5'-phosphomonoester.. Endonuclease that specifically degrades the RNA of RNA-DNA hybrids. In Streptococcus pneumoniae (strain P1031), this protein is Ribonuclease HIII.